Reading from the N-terminus, the 1194-residue chain is ATP-dependent RNA helicase DHX30 (1194 aa).

The segment covering 1-10 has biased composition (basic and acidic residues); the sequence is MFSLDSFRKD. A disordered region spans residues 1–27; that stretch reads MFSLDSFRKDRAQHRQRQCKLPPPRLP. 2 positions are modified to phosphoserine: serine 6 and arginine 15. In terms of domain architecture, DRBM spans 53–121; that stretch reads PKNLLNSVIG…QAAAAACQLF (69 aa). The disordered stretch occupies residues 150–199; that stretch reads ADSWWRPEPTMPPTSWRQLNPESIRPGGPGGLSRSLGREEEEDEEEELEE. The segment covering 188 to 199 has biased composition (acidic residues); that stretch reads EEEEDEEEELEE. Serine 226 and serine 380 each carry phosphoserine. Residues 444-612 enclose the Helicase ATP-binding domain; the sequence is LNAIEQHPVV…FGGCPVIKVP (169 aa). An ATP-binding site is contributed by 457–464; the sequence is GDTGCGKT. The DEAH box signature appears at 559–562; sequence DEVH. A Helicase C-terminal domain is found at 654-827; it reads LVTDLVLHID…NLVLQAKIHM (174 aa).

This sequence belongs to the DEAD box helicase family. DEAH subfamily. As to quaternary structure, identified in a complex with TFAM and SSBP1. Interacts with AGO1 and AGO2. Interacts (via N-terminus) with ZC3HAV1 (via N-terminal domain) in an RNA-independent manner. Found in a complex with GRSF1, DDX28, FASTKD2 and FASTKD5. Phosphorylated on Ser-15.

The protein localises to the cytoplasm. It localises to the mitochondrion. The protein resides in the mitochondrion matrix. It is found in the mitochondrion nucleoid. It catalyses the reaction ATP + H2O = ADP + phosphate + H(+). RNA-dependent helicase. Plays an important role in the assembly of the mitochondrial large ribosomal subunit. Required for optimal function of the zinc-finger antiviral protein ZC3HAV1. Associates with mitochondrial DNA. Involved in nervous system development and differentiation through its involvement in the up-regulation of a number of genes which are required for neurogenesis, including GSC, NCAM1, neurogenin, and NEUROD. The chain is ATP-dependent RNA helicase DHX30 (DHX30) from Homo sapiens (Human).